The following is a 413-amino-acid chain: MNHTKLKLSAVALTLALGLSACSGESPEKQVQSAESEQMKAVDVDKSMPMQSIESTAKRIGESAANWQIAQFGNLDYIPESHRAKSENAKFWIQASFYIGLTRWIDATDDKQLESFVKQVAEKENYELILERPYHADDHAIAQTYLWLAERAGVQEAYMPTKEVFDMILSKPPQVGLNMGDSESSSGKYHLEGNCQLRWCWADALFMAPRAWAQMTKVTSDPKYLEYGNKEFWAAADYLFSDEYGLFFRDSRYFDAKSDNGEPVFWGRGNGWVFAAIPMIIEELPEGHPSKDRYIELYKKHAEGLMALQKEDGYWPASLMDPDKVRTPEVSGTGFITFGLAWGVNNGILTDQRSKDVVEKGWSAITKAVTDDGRVNWVQHVGKSPDPVKESDSQLYGTGAVLLAASEMLIWNK.

The N-terminal stretch at 1 to 21 is a signal peptide; it reads MNHTKLKLSAVALTLALGLSA. Residue Cys22 is the site of N-palmitoyl cysteine attachment. Residue Cys22 is the site of S-diacylglycerol cysteine attachment. Asp203 functions as the Proton donor in the catalytic mechanism.

The protein belongs to the glycosyl hydrolase 105 family.

It is found in the cell membrane. Its function is as follows. Glucuronyl hydrolase involved in ulvan degradation. Ulvan is the main polysaccharide component of the Ulvales (green seaweed) cell wall. It is composed of disaccharide building blocks comprising 3-sulfated rhamnose (Rha3S) linked to D-glucuronic acid (GlcA), L-iduronic acid (IduA), or D-xylose (Xyl). Unsaturated 3S-rhamnoglycuronyl hydrolase works together with ulvan lyases to fully degrade the ulvan polymer, catalyzing specifically the cleavage of the unsaturated 4-deoxy-L-threo-hex-4-enopyranosiduronic acid (deltaUA) of the deltaUA-oligosaccharides deltaUA-Rha3S, deltaUA-Rha3S-IduA-Rha3S and deltaUA-Rha3S-Xyl-Rha3S, the end products of the ulvan lyase reaction. This chain is Unsaturated 3S-rhamnoglycuronyl hydrolase, found in Alteromonas sp. (strain LOR).